The primary structure comprises 373 residues: Cell surface Cu-only superoxide dismutase ARB_03674 (373 aa).

Residues 1–55 (MIWKQPPRRMGEMGGSLSRRFGNAAASWAVWRVSRSCFSLLFFFYFFLFFSSSSL) form the signal peptide. N-linked (GlcNAc...) asparagine glycans are attached at residues Asn-75 and Asn-141. His-194, His-196, and His-212 together coordinate Cu cation. Cys-206 and Cys-289 form a disulfide bridge. 2 N-linked (GlcNAc...) asparagine glycosylation sites follow: Asn-254 and Asn-274. A Cu cation-binding site is contributed by His-280. Asn-283 and Asn-291 each carry an N-linked (GlcNAc...) asparagine glycan. The tract at residues 329–348 (GHAPTISATYTPTPTPSPPA) is disordered. The segment covering 331-340 (APTISATYTP) has biased composition (low complexity). Gly-352 is lipidated: GPI-anchor amidated glycine. Positions 353–373 (AGRLVGFSLGAIMAALVPLAL) are cleaved as a propeptide — removed in mature form.

Belongs to the Cu-Zn superoxide dismutase family. As to quaternary structure, monomer. Cu cation is required as a cofactor. The GPI-anchor is attached to the protein in the endoplasmic reticulum and serves to target the protein to the cell surface. There, the glucosamine-inositol phospholipid moiety is cleaved off and the GPI-modified mannoprotein is covalently attached via its lipidless GPI glycan remnant to the 1,6-beta-glucan of the outer cell wall layer.

Its subcellular location is the secreted. It localises to the cell wall. It is found in the cell membrane. The catalysed reaction is 2 superoxide + 2 H(+) = H2O2 + O2. In terms of biological role, superoxide dismutases serve to convert damaging superoxide radicals, a key form of ROS, to less damaging hydrogen peroxide that can be converted into water by catalase action. Degrades host-derived reactive oxygen species to escape innate immune surveillance. Involved in the occurrence of miconazole-tolerant persisters in biofilms. Persisters are cells that survive high doses of an antimicrobial agent. The unusual attributes of SOD5-like fungal proteins, including the absence of zinc and an open active site that readily captures extracellular copper, make these SODs well suited to meet challenges in zinc and copper availability at the host-pathogen interface. This chain is Cell surface Cu-only superoxide dismutase ARB_03674, found in Arthroderma benhamiae (strain ATCC MYA-4681 / CBS 112371) (Trichophyton mentagrophytes).